Reading from the N-terminus, the 727-residue chain is MATNTKMETFVITGMTCANCSARIEKELNEQPGVMSATVNLATEKASVKYTDTTTERLIKSVENIGYGAILYDEAHKQKIAEEKQTYLRKMKFDLIFSAILTLPLMLAMIAMMLGSHGPIVSFFHLSLVQLLFALPVQFYVGWRFYKGAYHALKTKAPNMDVLVAIGTSAAFALSIYNGFFPSHSHDLYFESSSMIITLILLGKYLEHTAKSKTGDAIKQMMSLQTKTAQVLRDGKEETIAIDEVMIDDILVIRPGEQVPTDGRIIAGTSALDESMLTGESVPVEKKEKDMVFGGTINTNGLIQIQVSQIGKDTVLAQIIQMVEDAQGSKAPIQQIADKISGIFVPIVLFLALVTLLVTGWLTKDWQLALLHSVSVLVIACPCALGLATPTAIMVGTGVGAHNGILIKGGEALEGAAHLNSIILDKTGTITQGRPEVTDVIGPKEIISLFYSLEHASEHPLGKAIVAYGAKVGAKTQPITDFVAHPGAGISGTINGVHYFAGTRKRLAEMNLSFDEFQEQALELEQAGKTVMFLANEEQVLGMIAVADQIKEDAKQAIEQLQQKGVDVFMVTGDNQRAAQAIGKQVGIDSDHIFAEVLPEEKANYVEKLQKAGKKVGMVGDGINDAPALALADVGIAMGSGTDIAMETADVTLMNSHLTSINQMISLSAATLKKIKQNLFWAFIYNTIGIPFAAFGFLNPIIAGGAMAFSSISVLLNSLSLNRKTIK.

Residues 1 to 94 (MATNTKMETF…QTYLRKMKFD (94 aa)) lie on the Cytoplasmic side of the membrane. The HMA domain occupies 6-70 (KMETFVITGM…SVENIGYGAI (65 aa)). Cysteine 17 and cysteine 20 together coordinate Cu(+). Residues 95–115 (LIFSAILTLPLMLAMIAMMLG) form a helical membrane-spanning segment. Residues 116–119 (SHGP) lie on the Extracellular side of the membrane. Residues 120–137 (IVSFFHLSLVQLLFALPV) traverse the membrane as a helical segment. The Cytoplasmic portion of the chain corresponds to 138–161 (QFYVGWRFYKGAYHALKTKAPNMD). Residues 162 to 181 (VLVAIGTSAAFALSIYNGFF) traverse the membrane as a helical segment. At 182–187 (PSHSHD) the chain is on the extracellular side. The helical transmembrane segment at 188 to 203 (LYFESSSMIITLILLG) threads the bilayer. Over 204-341 (KYLEHTAKSK…PIQQIADKIS (138 aa)) the chain is Cytoplasmic. A helical membrane pass occupies residues 342–362 (GIFVPIVLFLALVTLLVTGWL). The Extracellular portion of the chain corresponds to 363 to 375 (TKDWQLALLHSVS). Residues 376 to 396 (VLVIACPCALGLATPTAIMVG) traverse the membrane as a helical segment. The Cytoplasmic portion of the chain corresponds to 397-678 (TGVGAHNGIL…AATLKKIKQN (282 aa)). Catalysis depends on aspartate 425, which acts as the 4-aspartylphosphate intermediate. Mg(2+) is bound by residues aspartate 621 and aspartate 625. The helical transmembrane segment at 679–698 (LFWAFIYNTIGIPFAAFGFL) threads the bilayer. Residues 699 to 700 (NP) lie on the Extracellular side of the membrane. Residues 701–721 (IIAGGAMAFSSISVLLNSLSL) traverse the membrane as a helical segment. Over 722–727 (NRKTIK) the chain is Cytoplasmic.

Belongs to the cation transport ATPase (P-type) (TC 3.A.3) family. Type IB subfamily. Monomer. Interacts with the copper chaperone CopZ.

It is found in the cell membrane. The enzyme catalyses Cu(+)(in) + ATP + H2O = Cu(+)(out) + ADP + phosphate + H(+). Inhibited by vanadate. Functionally, probably involved in copper import under copper limiting conditions. This is Probable copper-importing P-type ATPase A (copA) from Enterococcus hirae (strain ATCC 9790 / DSM 20160 / JCM 8729 / LMG 6399 / NBRC 3181 / NCIMB 6459 / NCDO 1258 / NCTC 12367 / WDCM 00089 / R).